Reading from the N-terminus, the 547-residue chain is Chaperonin GroEL 1 (547 aa).

ATP is bound by residues 30-33 (TLGP), lysine 51, 87-91 (DGTTT), glycine 415, and aspartate 496.

Belongs to the chaperonin (HSP60) family. In terms of assembly, forms a cylinder of 14 subunits composed of two heptameric rings stacked back-to-back. Interacts with the co-chaperonin GroES.

The protein localises to the cytoplasm. It carries out the reaction ATP + H2O + a folded polypeptide = ADP + phosphate + an unfolded polypeptide.. In terms of biological role, together with its co-chaperonin GroES, plays an essential role in assisting protein folding. The GroEL-GroES system forms a nano-cage that allows encapsulation of the non-native substrate proteins and provides a physical environment optimized to promote and accelerate protein folding. The protein is Chaperonin GroEL 1 of Bradyrhizobium sp. (strain BTAi1 / ATCC BAA-1182).